Here is a 625-residue protein sequence, read N- to C-terminus: Arginine--tRNA ligase (625 aa).

The 'HIGH' region motif lies at 117 to 127 (ANPIHPLHIGH).

This sequence belongs to the class-I aminoacyl-tRNA synthetase family.

The protein resides in the cytoplasm. It catalyses the reaction tRNA(Arg) + L-arginine + ATP = L-arginyl-tRNA(Arg) + AMP + diphosphate. This is Arginine--tRNA ligase from Saccharolobus solfataricus (strain ATCC 35092 / DSM 1617 / JCM 11322 / P2) (Sulfolobus solfataricus).